A 293-amino-acid chain; its full sequence is Small ribosomal subunit biogenesis GTPase RsgA (293 aa).

The CP-type G domain occupies 63-223 (KNELVRPPIA…VADTPGFSSL (161 aa)). GTP is bound by residues 112–115 (SKMD) and 166–174 (GQSGVGKSS). Zn(2+)-binding residues include cysteine 247, cysteine 252, histidine 254, and cysteine 260.

It belongs to the TRAFAC class YlqF/YawG GTPase family. RsgA subfamily. In terms of assembly, monomer. Associates with 30S ribosomal subunit, binds 16S rRNA. Zn(2+) is required as a cofactor.

The protein resides in the cytoplasm. One of several proteins that assist in the late maturation steps of the functional core of the 30S ribosomal subunit. Helps release RbfA from mature subunits. May play a role in the assembly of ribosomal proteins into the subunit. Circularly permuted GTPase that catalyzes slow GTP hydrolysis, GTPase activity is stimulated by the 30S ribosomal subunit. The sequence is that of Small ribosomal subunit biogenesis GTPase RsgA from Bacillus cereus (strain ATCC 14579 / DSM 31 / CCUG 7414 / JCM 2152 / NBRC 15305 / NCIMB 9373 / NCTC 2599 / NRRL B-3711).